Here is a 359-residue protein sequence, read N- to C-terminus: 5-formaminoimidazole-4-carboxamide-1-(beta)-D-ribofuranosyl 5'-monophosphate synthetase (359 aa).

The 5-amino-1-(5-phospho-beta-D-ribosyl)imidazole-4-carboxamide site is built by His28 and Ser95. Positions 115-346 (ELMIWETDRD…MGRRIAREIK (232 aa)) constitute an ATP-grasp domain. Residues 144-206 (PEEI…ANIY) and Glu228 each bind ATP. Residue Asn256 coordinates 5-amino-1-(5-phospho-beta-D-ribosyl)imidazole-4-carboxamide. The Mg(2+) site is built by Glu295 and Glu308.

It belongs to the phosphohexose mutase family. Requires Mg(2+) as cofactor. Mn(2+) serves as cofactor.

It carries out the reaction 5-amino-1-(5-phospho-beta-D-ribosyl)imidazole-4-carboxamide + formate + ATP = 5-formamido-1-(5-phospho-D-ribosyl)imidazole-4-carboxamide + ADP + phosphate. It participates in purine metabolism; IMP biosynthesis via de novo pathway; 5-formamido-1-(5-phospho-D-ribosyl)imidazole-4-carboxamide from 5-amino-1-(5-phospho-D-ribosyl)imidazole-4-carboxamide (formate route): step 1/1. Its function is as follows. Catalyzes the ATP- and formate-dependent formylation of 5-aminoimidazole-4-carboxamide-1-beta-d-ribofuranosyl 5'-monophosphate (AICAR) to 5-formaminoimidazole-4-carboxamide-1-beta-d-ribofuranosyl 5'-monophosphate (FAICAR) in the absence of folates. This is 5-formaminoimidazole-4-carboxamide-1-(beta)-D-ribofuranosyl 5'-monophosphate synthetase from Archaeoglobus fulgidus (strain ATCC 49558 / DSM 4304 / JCM 9628 / NBRC 100126 / VC-16).